Reading from the N-terminus, the 273-residue chain is NH(3)-dependent NAD(+) synthetase (273 aa).

46 to 53 (GISGGQDS) is an ATP binding site. Position 52 (Asp52) interacts with Mg(2+). Deamido-NAD(+) is bound at residue Arg139. Thr159 provides a ligand contact to ATP. A Mg(2+)-binding site is contributed by Glu164. Residues Lys172 and Asp179 each coordinate deamido-NAD(+). The ATP site is built by Lys188 and Thr210. A deamido-NAD(+)-binding site is contributed by 259–260 (HK).

Belongs to the NAD synthetase family. In terms of assembly, homodimer.

The catalysed reaction is deamido-NAD(+) + NH4(+) + ATP = AMP + diphosphate + NAD(+) + H(+). It functions in the pathway cofactor biosynthesis; NAD(+) biosynthesis; NAD(+) from deamido-NAD(+) (ammonia route): step 1/1. Catalyzes the ATP-dependent amidation of deamido-NAD to form NAD. Uses ammonia as a nitrogen source. This is NH(3)-dependent NAD(+) synthetase from Mycobacteroides abscessus (strain ATCC 19977 / DSM 44196 / CCUG 20993 / CIP 104536 / JCM 13569 / NCTC 13031 / TMC 1543 / L948) (Mycobacterium abscessus).